Reading from the N-terminus, the 190-residue chain is MDIGTFWSVAAIPLLILVARIAEASLESVRTIYISKGHANLAAYVGIVKTGIWLISTGLVLTDLMQFWNLFAYLAGYGMGTVLGMEIENLISIGYVIVRLITPSDPQALMSRLSTLGYGMTRIEGTGSFSGSVSIIFMIVPRKELSRLLSIISREYPDLLYTIEDVRNIKDGARIFYQDPKRRILSFFGM.

3 consecutive transmembrane segments (helical) span residues 3-23 (IGTFWSVAAIPLLILVARIAE), 41-61 (LAAYVGIVKTGIWLISTGLVL), and 67-87 (FWNLFAYLAGYGMGTVLGMEI).

Belongs to the UPF0316 family.

The protein localises to the cell membrane. In Methanoregula boonei (strain DSM 21154 / JCM 14090 / 6A8), this protein is UPF0316 protein Mboo_0605.